The following is a 363-amino-acid chain: Serpentine receptor class beta-18 (363 aa).

Transmembrane regions (helical) follow at residues 52 to 72 (LAQFSHVVFSFMGLIIVVVYI), 92 to 112 (MLLFIVAHSIDMIVLHIYHII), 135 to 155 (FRYTFSFCSMGLAICTYCIYI), 172 to 192 (LILAAQICQLIVISSLIIIWV), 218 to 238 (KATIAVFPINFICFFLSIGLF), 276 to 296 (AALMALFSVASLLMRLVYNFL), and 303 to 323 (TIATLSYIMSIYCFTVPLVIV).

The protein belongs to the nematode receptor-like protein srb family.

It is found in the membrane. This is Serpentine receptor class beta-18 (srb-18) from Caenorhabditis elegans.